The chain runs to 963 residues: uncharacterized protein (963 aa).

2 coiled-coil regions span residues N176–M236 and D373–V467. The helical transmembrane segment at I468 to I488 threads the bilayer. Coiled coils occupy residues R536 to A570 and A647 to S789.

The protein localises to the cell membrane. This is an uncharacterized protein from Bacillus subtilis (strain 168).